The following is a 351-amino-acid chain: MTILSDVKALGQQIWLDNLSRSLVQSGELAQMLKQGVCGVTSNPAIFQKAFAGDALYADEVAALKQQDLTPKQRYETMAVADVRAACGVCLAEHESTGGKTGFVSLEVSPELSKDAQGTVEEARRLYAAIGCKNAMIKVPATDAGIDALETLVSDGISVNLTLLFSRAQTLKAYAAYARGIAKRLAAGQSVAHIHVVASFFISRVDSALDTTLPDRLKGKIAIALAKAAYQDWEQYFTAPEFAALEAQGANRVQLLWASTGVKNPAYPDTLYVDSLIGAHTVNTVPDATLKAFIDHGTAKATLTEGADEAQAQLAEIAALGIDVETLAARLQEDGLKQFEEAFEKLLAPLV.

Lys-138 (schiff-base intermediate with substrate) is an active-site residue.

It belongs to the transaldolase family. Type 2 subfamily.

The protein resides in the cytoplasm. It catalyses the reaction D-sedoheptulose 7-phosphate + D-glyceraldehyde 3-phosphate = D-erythrose 4-phosphate + beta-D-fructose 6-phosphate. It participates in carbohydrate degradation; pentose phosphate pathway; D-glyceraldehyde 3-phosphate and beta-D-fructose 6-phosphate from D-ribose 5-phosphate and D-xylulose 5-phosphate (non-oxidative stage): step 2/3. Its function is as follows. Transaldolase is important for the balance of metabolites in the pentose-phosphate pathway. In Neisseria meningitidis serogroup A / serotype 4A (strain DSM 15465 / Z2491), this protein is Transaldolase (tal).